Reading from the N-terminus, the 346-residue chain is GTPase Obg (346 aa).

One can recognise an Obg domain in the interval 1–159 (MKFLDSAKIY…RTVLLRLKLI (159 aa)). Positions 160 to 327 (ADAGLVGLPN…ALRAVLAEID (168 aa)) constitute an OBG-type G domain. Residues 166–173 (GLPNAGKS), 191–195 (FTTLN), 212–215 (DIPG), 279–282 (SKVD), and 308–310 (SAA) each bind GTP. Mg(2+) contacts are provided by Ser173 and Thr193.

The protein belongs to the TRAFAC class OBG-HflX-like GTPase superfamily. OBG GTPase family. In terms of assembly, monomer. It depends on Mg(2+) as a cofactor.

Its subcellular location is the cytoplasm. Its function is as follows. An essential GTPase which binds GTP, GDP and possibly (p)ppGpp with moderate affinity, with high nucleotide exchange rates and a fairly low GTP hydrolysis rate. Plays a role in control of the cell cycle, stress response, ribosome biogenesis and in those bacteria that undergo differentiation, in morphogenesis control. This is GTPase Obg from Methylocella silvestris (strain DSM 15510 / CIP 108128 / LMG 27833 / NCIMB 13906 / BL2).